A 137-amino-acid chain; its full sequence is MPTINQLVRKPRKSKVKKSKSPALNVGYNSRKKVQTNVSSPQKRGVATRVGTMTPKKPNSALRKFARVRLTNLIEVTAYIPGIGHNLQKHSVVLLRGGRVKDLPGVRYHIVRGALDTAGVNDRKQGRSKYGTKRPKG.

Residues 1 to 57 (MPTINQLVRKPRKSKVKKSKSPALNVGYNSRKKVQTNVSSPQKRGVATRVGTMTPKK) form a disordered region. Over residues 9 to 20 (RKPRKSKVKKSK) the composition is skewed to basic residues. Aspartate 102 carries the post-translational modification 3-methylthioaspartic acid.

It belongs to the universal ribosomal protein uS12 family. As to quaternary structure, part of the 30S ribosomal subunit. Contacts proteins S8 and S17. May interact with IF1 in the 30S initiation complex.

Its function is as follows. With S4 and S5 plays an important role in translational accuracy. Interacts with and stabilizes bases of the 16S rRNA that are involved in tRNA selection in the A site and with the mRNA backbone. Located at the interface of the 30S and 50S subunits, it traverses the body of the 30S subunit contacting proteins on the other side and probably holding the rRNA structure together. The combined cluster of proteins S8, S12 and S17 appears to hold together the shoulder and platform of the 30S subunit. This chain is Small ribosomal subunit protein uS12, found in Streptococcus suis (strain 05ZYH33).